The following is a 234-amino-acid chain: MASKVLKGIRAIAFDLDGTLVDSAGGLADALDQALLAKGLPAAGKERVAAWVGNGADIMVERALTWARTKLTAQLHKETRELFDRFYETTVTTGSQLFPEVKVTLAELAKHNLPMGIITNKPTPFIAPLLASLDISEYFSLVLGGDDVKEKKPHPAPIYLTMGTFGLRKEELLFVGDSRNDILAAQAAGCPCVGLTYGYNYGESIALSNPDCILTNFSDLLSTIGLPSLKLQEA.

The active-site Nucleophile is aspartate 15. 3 residues coordinate Mg(2+): aspartate 15, aspartate 17, and aspartate 177.

The protein belongs to the HAD-like hydrolase superfamily. CbbY/CbbZ/Gph/YieH family. As to quaternary structure, monomer. Mg(2+) is required as a cofactor. Chloride serves as cofactor.

It carries out the reaction 2-phosphoglycolate + H2O = glycolate + phosphate. It functions in the pathway organic acid metabolism; glycolate biosynthesis; glycolate from 2-phosphoglycolate: step 1/1. Specifically catalyzes the dephosphorylation of 2-phosphoglycolate. Is involved in the dissimilation of the intracellular 2-phosphoglycolate formed during the DNA repair of 3'-phosphoglycolate ends, a major class of DNA lesions induced by oxidative stress. The polypeptide is Phosphoglycolate phosphatase (Photorhabdus laumondii subsp. laumondii (strain DSM 15139 / CIP 105565 / TT01) (Photorhabdus luminescens subsp. laumondii)).